A 633-amino-acid chain; its full sequence is Putative ankyrin repeat protein L774 (633 aa).

7 ANK repeats span residues 91–120 (IYGHLYCLYIKNNRLDLCDYLIQSNYEYDP), 123–152 (NCDDILEFVPDENEADVLMYIINNNNFFKI), 221–250 (NVNKLLEIACIFSITEIVTHLLDIGTEYDF), 252–275 (TILKSHISLHILKIFLNRGNILDS), 338–367 (DYDVVMKKAIMNSSLDIIDYCISNGTDVNN), 369–393 (MTYAFQHYNQSCFTHLLNQGGTLST), and 517–546 (DNLKILFVAIMKYDIDMLKFLFEINDNSND).

This is Putative ankyrin repeat protein L774 from Acanthamoeba polyphaga mimivirus (APMV).